A 918-amino-acid polypeptide reads, in one-letter code: MELTGLTRAAAAATVTPPAPRRGWGELRFAPLLPGERHGRRKVVVAAISEEVPRLAASPSSGIKGGGAGERRPAPEKVALRAALTVRRKQKEDIKEAVAGHLDALWDMVGRNVVLELISTKIHPRTKKPMQSGRVSIKDWCQKRGAKGDHVVYTAEFTVDADFGEPGAIAVANRHNREFFLESIVVEGGGLPCGPVHFACNSWVQSTRELPTKRVFFSNKPYLPSETPPGLRELREKELKDLRGDGTGVRKLSDRIYDYATYNDLGNPDKGKEFIRPILGGEKIPYPRRCRTGRPPTDTNMLAESRVEKPHPIYVPRDEAFEELKQGAFSSGRLRAVLHTLIPSLIASISAETHNFQGFHHIDNLYKEGLRLKLGLQEHLFQKIPLVQKIQESSEGMLRYDTPSILSKDKFAWLRDDEFARQAVAGINPVNIERLQVFPPVSKLDPAIYGPPESSITETHIAGHLNGLTVQQAMDEAKLFIVDYHDAYLPFLDRINAIDGRKAYATRTIFFLTEAGTLKPIAIELSLPPAKPGEPRPSKVLTPPYDATSNWLWMLAKAHVSSNDAGVHQLVNHWLRTHATMEPFILAAHRHMSAMHPIFKLLHPHMRYTLEINALARQSLINADGVIESCFTPGPVSGEISAAYYRNHWRFDLEGLPSDLIRRGVAVEDATQPHGVRLLIEDYPYANDGLLLWSAIRSWVESYVQLYYPDAGTVQCDLELQGWYHESIHVGHGDLRHAPWWPPLSTPVDLASILTTLVWLASAQHAALNFGQYPLGGYVPNRPPLIRRLLPDLERDAAEYAAFLADPHRFFLNAMPGVLEATKFMAVVDTLSTHSPDEEYLGEGRDEGGVPWTADEAAVAAHGMFAADVRRAEETIERRNADHGRKNRCGAGVLPYELLAPSSPPGVTCRGVPNSISI.

The tract at residues 56–76 is disordered; it reads AASPSSGIKGGGAGERRPAPE. The 129-residue stretch at 90–218 folds into the PLAT domain; it reads QKEDIKEAVA…ELPTKRVFFS (129 aa). Positions 221–918 constitute a Lipoxygenase domain; that stretch reads PYLPSETPPG…CRGVPNSISI (698 aa). Fe cation contacts are provided by His-573, His-578, His-765, Asn-769, and Ile-918.

The protein belongs to the lipoxygenase family. Fe cation is required as a cofactor.

The catalysed reaction is (9Z,12Z)-octadecadienoate + O2 = (13S)-hydroperoxy-(9Z,11E)-octadecadienoate. It catalyses the reaction (9Z,12Z,15Z)-octadecatrienoate + O2 = (13S)-hydroperoxy-(9Z,11E,15Z)-octadecatrienoate. It participates in lipid metabolism; oxylipin biosynthesis. Functionally, plant lipoxygenase may be involved in a number of diverse aspects of plant physiology including growth and development, pest resistance, and senescence or responses to wounding. Catalyzes the hydroperoxidation of lipids containing a cis,cis-1,4-pentadiene structure. The polypeptide is Probable lipoxygenase 6 (Oryza sativa subsp. japonica (Rice)).